An 87-amino-acid polypeptide reads, in one-letter code: MAIFKSISSISNSTVSIGSTIGASNQTGSNINDNSIACFDGGLRGNGGFNGGWGGIGGFNGGCGGSNANIINLDIDIGRRHHRRHCC.

Belongs to the UPF0512 family.

The polypeptide is UPF0512 protein B (Dictyostelium discoideum (Social amoeba)).